A 36-amino-acid polypeptide reads, in one-letter code: Light-harvesting protein B-1015 gamma chain (36 aa).

Functionally, one of the components of the bacteriochlorophyll-protein complex in the chromatophore membrane. The polypeptide is Light-harvesting protein B-1015 gamma chain (Blastochloris viridis (Rhodopseudomonas viridis)).